The chain runs to 507 residues: Bifunctional purine biosynthesis protein PurH (507 aa).

The 144-residue stretch at 1–144 (MKRALLSVSD…KNSDSVWAVV (144 aa)) folds into the MGS-like domain.

This sequence belongs to the PurH family.

It catalyses the reaction (6R)-10-formyltetrahydrofolate + 5-amino-1-(5-phospho-beta-D-ribosyl)imidazole-4-carboxamide = 5-formamido-1-(5-phospho-D-ribosyl)imidazole-4-carboxamide + (6S)-5,6,7,8-tetrahydrofolate. It carries out the reaction IMP + H2O = 5-formamido-1-(5-phospho-D-ribosyl)imidazole-4-carboxamide. Its pathway is purine metabolism; IMP biosynthesis via de novo pathway; 5-formamido-1-(5-phospho-D-ribosyl)imidazole-4-carboxamide from 5-amino-1-(5-phospho-D-ribosyl)imidazole-4-carboxamide (10-formyl THF route): step 1/1. The protein operates within purine metabolism; IMP biosynthesis via de novo pathway; IMP from 5-formamido-1-(5-phospho-D-ribosyl)imidazole-4-carboxamide: step 1/1. This Lacticaseibacillus casei (strain BL23) (Lactobacillus casei) protein is Bifunctional purine biosynthesis protein PurH.